The sequence spans 828 residues: ADP-ribosylation factor GTPase-activating protein AGD1 (828 aa).

A BAR domain is found at Met-1–Gln-225. Residues Gln-225–Ser-255 are a coiled coil. A disordered region spans residues Gln-247–Ser-268. The PH domain occupies Gln-288 to Ala-425. Ser-441 bears the Phosphoserine mark. The 146-residue stretch at Glu-498–Gln-643 folds into the Arf-GAP domain. The C4-type zinc-finger motif lies at Cys-513 to Cys-536. Low complexity predominate over residues Thr-590–Pro-600. Residues Thr-590–Arg-611 form a disordered region. ANK repeat units follow at residues Asn-735–Ala-764 and Lys-768–Ala-797.

As to expression, expressed in roots, but not in hypocotyls or cotyledons. Low levels detected in leaf and shoot apical meristems and in siliques.

It is found in the endosome. Its function is as follows. Probable GTPase-activating protein. Regulator of membrane trafficking. Required for maintaining a straight growth of root hairs. This is ADP-ribosylation factor GTPase-activating protein AGD1 (AGD1) from Arabidopsis thaliana (Mouse-ear cress).